The chain runs to 229 residues: Prolactin (229 aa).

The signal sequence occupies residues M1–S30. C34 and C41 are oxidised to a cystine. Residues S56, S64, and S120 each carry the phosphoserine modification. 2 cysteine pairs are disulfide-bonded: C88–C204 and C221–C229.

Belongs to the somatotropin/prolactin family. Interacts with PRLR.

Its subcellular location is the secreted. In terms of biological role, prolactin acts primarily on the mammary gland by promoting lactation. The polypeptide is Prolactin (PRL) (Neovison vison (American mink)).